A 428-amino-acid polypeptide reads, in one-letter code: C4-dicarboxylate transport protein (428 aa).

A run of 8 helical transmembrane segments spans residues 8 to 28 (SLYF…HFYP), 44 to 64 (LIKM…IAGM), 76 to 96 (VALL…LIIV), 142 to 162 (IGAF…LFGF), 184 to 204 (VIFG…FGAM), 222 to 242 (LIIC…GSIA), 326 to 346 (IVHQ…AAGV), and 352 to 372 (IVLA…LALI).

This sequence belongs to the dicarboxylate/amino acid:cation symporter (DAACS) (TC 2.A.23) family.

The protein resides in the cell inner membrane. In terms of biological role, responsible for the transport of dicarboxylates such as succinate, fumarate, and malate from the periplasm across the membrane. This chain is C4-dicarboxylate transport protein, found in Shigella dysenteriae serotype 1 (strain Sd197).